The primary structure comprises 369 residues: Tyrosyl-DNA phosphodiesterase 2 (369 aa).

Residues 1–17 (MELEARAEPRSPRAGRG) show a composition bias toward basic and acidic residues. Disordered stretches follow at residues 1–26 (MELE…EDEE) and 80–117 (AAAA…QQDD). The segment covering 99-112 (DDTASNTSSSGADS) has biased composition (low complexity). Residues 127–131 (NIDGL) are interaction with 5' end of substrate DNA. Positions 129 and 159 each coordinate Mg(2+). The tract at residues 233-238 (HLESTR) is interaction with 5' end of substrate DNA. D269 acts as the Proton donor/acceptor in catalysis. Residues 271–273 (NLR) are interaction with 5' end of substrate DNA.

The protein belongs to the CCR4/nocturin family. TTRAP/TDP2 subfamily. Requires Mg(2+) as cofactor. Mn(2+) serves as cofactor.

It is found in the nucleus. The protein resides in the PML body. Its function is as follows. DNA repair enzyme that can remove a variety of covalent adducts from DNA through hydrolysis of a 5'-phosphodiester bond, giving rise to DNA with a free 5' phosphate. Catalyzes the hydrolysis of dead-end complexes between DNA and the topoisomerase 2 (TOP2) active site tyrosine residue. Hydrolyzes 5'-phosphoglycolates on protruding 5' ends on DNA double-strand breaks (DSBs) due to DNA damage by radiation and free radicals. The 5'-tyrosyl DNA phosphodiesterase activity can enable the repair of TOP2-induced DSBs without the need for nuclease activity, creating a 'clean' DSB with 5'-phosphate termini that are ready for ligation. Also has 3'-tyrosyl DNA phosphodiesterase activity, but less efficiently and much slower than TDP1. The chain is Tyrosyl-DNA phosphodiesterase 2 (TDP2) from Gallus gallus (Chicken).